The chain runs to 224 residues: UPF0758 protein Nmul_A2138 (224 aa).

One can recognise an MPN domain in the interval 102–224 (AMDSPGPVRA…TLSFAEQGLI (123 aa)). Positions 173, 175, and 186 each coordinate Zn(2+). A JAMM motif motif is present at residues 173–186 (HNHPSGAAEPSHAD).

Belongs to the UPF0758 family.

This chain is UPF0758 protein Nmul_A2138, found in Nitrosospira multiformis (strain ATCC 25196 / NCIMB 11849 / C 71).